The primary structure comprises 466 residues: Exodeoxyribonuclease 7 large subunit (466 aa).

The protein belongs to the XseA family. Heterooligomer composed of large and small subunits.

The protein resides in the cytoplasm. It carries out the reaction Exonucleolytic cleavage in either 5'- to 3'- or 3'- to 5'-direction to yield nucleoside 5'-phosphates.. In terms of biological role, bidirectionally degrades single-stranded DNA into large acid-insoluble oligonucleotides, which are then degraded further into small acid-soluble oligonucleotides. In Vesicomyosocius okutanii subsp. Calyptogena okutanii (strain HA), this protein is Exodeoxyribonuclease 7 large subunit.